A 194-amino-acid chain; its full sequence is Large ribosomal subunit protein bL25 (194 aa).

This sequence belongs to the bacterial ribosomal protein bL25 family. CTC subfamily. Part of the 50S ribosomal subunit; part of the 5S rRNA/L5/L18/L25 subcomplex. Contacts the 5S rRNA. Binds to the 5S rRNA independently of L5 and L18.

Functionally, this is one of the proteins that binds to the 5S RNA in the ribosome where it forms part of the central protuberance. The protein is Large ribosomal subunit protein bL25 of Geotalea uraniireducens (strain Rf4) (Geobacter uraniireducens).